Here is a 1083-residue protein sequence, read N- to C-terminus: DNA-directed RNA polymerase subunit beta (1083 aa).

The protein belongs to the RNA polymerase beta chain family. In plastids the minimal PEP RNA polymerase catalytic core is composed of four subunits: alpha, beta, beta', and beta''. When a (nuclear-encoded) sigma factor is associated with the core the holoenzyme is formed, which can initiate transcription.

It is found in the plastid. The protein resides in the chloroplast. The enzyme catalyses RNA(n) + a ribonucleoside 5'-triphosphate = RNA(n+1) + diphosphate. Functionally, DNA-dependent RNA polymerase catalyzes the transcription of DNA into RNA using the four ribonucleoside triphosphates as substrates. In Acorus calamus var. americanus (American sweet flag), this protein is DNA-directed RNA polymerase subunit beta.